Reading from the N-terminus, the 516-residue chain is Potassium voltage-gated channel subfamily A member 10 (516 aa).

A helical transmembrane segment spans residues 223–244; sequence VALVSVLVIVISIIIFCMETLP. The N-linked (GlcNAc...) asparagine glycan is linked to N261. A helical transmembrane segment spans residues 276–296; that stretch reads FFVIETACIIWFSFELFVRFI. A helical membrane pass occupies residues 308 to 328; sequence IMNIIDIVSIIPYFVTLTTEL. N-linked (GlcNAc...) asparagine glycosylation is present at N339. A helical; Voltage-sensor membrane pass occupies residues 344 to 363; that stretch reads ILRIIRLVRVFRIFKLSRHS. Residues 380 to 400 traverse the membrane as a helical segment; that stretch reads LGLLIFFLFIGVILFSSAVYF. The short motif at 426–431 is the Selectivity filter element; it reads TVGYGD. Residues 441 to 461 traverse the membrane as a helical segment; that stretch reads IVGTLCAIAGVLTIALPVPVI. N-linked (GlcNAc...) asparagine glycosylation occurs at N503.

Belongs to the potassium channel family. A (Shaker) (TC 1.A.1.2) subfamily. Kv1.8/KCNA10 sub-subfamily. Homotetramer. Detected in brain, cochlear sensory epithelium, cochlear ganglion, tegumentum vasculosum. Detected at low levels in cochlear lagena.

Its subcellular location is the membrane. The enzyme catalyses K(+)(in) = K(+)(out). The channel activity is up-regulated by cAMP. Voltage-gated potassium ion channel that mediates K(+) permeability of excitable membranes. When opened in response to the voltage difference across the membrane, KCNA10 channel selectively allows the flow of potassium ions across the membrane down their electrochemical gradient. The protein is Potassium voltage-gated channel subfamily A member 10 (KCNA10) of Gallus gallus (Chicken).